Here is a 256-residue protein sequence, read N- to C-terminus: tRNA (guanine-N(1)-)-methyltransferase (256 aa).

S-adenosyl-L-methionine-binding positions include Gly117 and 137 to 142; that span reads LGDFVL.

It belongs to the RNA methyltransferase TrmD family. As to quaternary structure, homodimer.

The protein resides in the cytoplasm. The catalysed reaction is guanosine(37) in tRNA + S-adenosyl-L-methionine = N(1)-methylguanosine(37) in tRNA + S-adenosyl-L-homocysteine + H(+). In terms of biological role, specifically methylates guanosine-37 in various tRNAs. This Methylibium petroleiphilum (strain ATCC BAA-1232 / LMG 22953 / PM1) protein is tRNA (guanine-N(1)-)-methyltransferase.